The chain runs to 550 residues: MTREPFLRMENIVKAFPGVVANDHIDLTVERGEIHGLLGENGAGKSTLMKILYGLYSQDDGEISLSGTRLRLDSPQDAIDAGIGMVHQHFMLIPRLTVAENVVLGEREPATPFRPDADAGGWLPDAVRSNSLVQSLAGRFSLGLDVPERRIQELADRYGFDIDVSAKVWELGVGQQQRVEILKALYRDVDLLILDEPTAVLTPTEADLLFDSLERLTDEGVSIIFITHKLEEVEAVVDRVTVLRDGENVGTVSTSDVSRADLAEMMVGREVLFTVDRERVAPGEPVLRARNVSATDDRGIEALSNVDLTVRRGEVVGIAGVSGNGQKELAEVIAGLRTVSAGELTVDGRDLTNASPRTFIDNGVSFVPEDRNRYGSAGDLSVMHNAAMKDFREDRFGSGVTLDYGELRAHAEALVEAFDVRGVHDVTDATAGDLSGGNLQKLILAREISRDPDLLVANQPTRGVDVGAIESIREAILDQRTEGTGVVLLSEDLDEIIDLSDRILVVYEGEVVYETTPEDADRERIGLEMTGGGDATATAGAQVRGLGGSS.

2 ABC transporter domains span residues leucine 7–glutamate 270 and leucine 287–glycine 533. Residue glycine 39–serine 46 coordinates ATP. A disordered region spans residues methionine 529 to serine 550.

This sequence belongs to the ABC transporter superfamily. In terms of assembly, the complex is composed of two ATP-binding proteins (TsgD13), two transmembrane proteins (TsgB13 and TsgC13) and a solute-binding protein (TsgA13).

It localises to the cell membrane. The enzyme catalyses D-glucose(out) + ATP + H2O = D-glucose(in) + ADP + phosphate + H(+). Functionally, part of an ABC transporter complex involved in glucose import. Responsible for energy coupling to the transport system. The sequence is that of Glucose import ATP-binding protein TsgD13 (tsgD13) from Haloferax volcanii (strain ATCC 29605 / DSM 3757 / JCM 8879 / NBRC 14742 / NCIMB 2012 / VKM B-1768 / DS2) (Halobacterium volcanii).